The following is a 77-amino-acid chain: Large ribosomal subunit protein bL28 (77 aa).

A disordered region spans residues 1 to 20 (MSRVCQVTGKGPVTGNNISH).

It belongs to the bacterial ribosomal protein bL28 family.

In Pseudomonas syringae pv. tomato (strain ATCC BAA-871 / DC3000), this protein is Large ribosomal subunit protein bL28.